The following is a 154-amino-acid chain: L-alanine exporter AlaE (154 aa).

The next 4 membrane-spanning stretches (helical) occupy residues 21–41, 51–71, 90–110, and 115–135; these read FAMV…LSGM, LVAI…RDFF, ILAY…VIGA, and IVAA…VYGY.

Belongs to the AlaE exporter family.

Its subcellular location is the cell inner membrane. In terms of biological role, exports L-alanine. The protein is L-alanine exporter AlaE of Escherichia fergusonii (strain ATCC 35469 / DSM 13698 / CCUG 18766 / IAM 14443 / JCM 21226 / LMG 7866 / NBRC 102419 / NCTC 12128 / CDC 0568-73).